Consider the following 541-residue polypeptide: Formimidoyltransferase-cyclodeaminase (541 aa).

The segment at 1 to 181 (MSQLVECVPN…GATVTGARKF (181 aa)) is formiminotransferase N-subdomain. His82 functions as the For formimidoyltransferase activity in the catalytic mechanism. 163–172 (GPSSFVPSWG) provides a ligand contact to folate. The interval 182–326 (LIAFNINLLS…PKERIIEYLV (145 aa)) is formiminotransferase C-subdomain. A linker region spans residues 327–334 (PDSGPEQS). The interval 335-541 (LLDTSLRGFV…VLGSLEARKE (207 aa)) is cyclodeaminase/cyclohydrolase. The For cyclodeaminase activity role is filled by Asp412. Ser520 bears the Phosphoserine mark.

This sequence in the C-terminal section; belongs to the cyclodeaminase/cyclohydrolase family. In the N-terminal section; belongs to the formiminotransferase family. As to quaternary structure, homooctamer, including four polyglutamate binding sites. The subunits are arranged as a tetramer of dimers, and form a planar ring-shaped structure.

The protein resides in the cytoplasm. Its subcellular location is the cytoskeleton. It is found in the microtubule organizing center. It localises to the centrosome. The protein localises to the centriole. The protein resides in the golgi apparatus. It catalyses the reaction 5-formimidoyltetrahydrofolate + L-glutamate = N-formimidoyl-L-glutamate + (6S)-5,6,7,8-tetrahydrofolate. It carries out the reaction (6S)-5-formyl-5,6,7,8-tetrahydrofolate + L-glutamate = N-formyl-L-glutamate + (6S)-5,6,7,8-tetrahydrofolate + H(+). The enzyme catalyses 5-formimidoyltetrahydrofolate + 2 H(+) = (6R)-5,10-methenyltetrahydrofolate + NH4(+). Its pathway is amino-acid degradation; L-histidine degradation into L-glutamate; L-glutamate from N-formimidoyl-L-glutamate (transferase route): step 1/1. It functions in the pathway one-carbon metabolism; tetrahydrofolate interconversion. In terms of biological role, folate-dependent enzyme, that displays both transferase and deaminase activity. Serves to channel one-carbon units from formiminoglutamate to the folate pool. Its function is as follows. Binds and promotes bundling of vimentin filaments originating from the Golgi. The polypeptide is Formimidoyltransferase-cyclodeaminase (Ftcd) (Mus musculus (Mouse)).